The primary structure comprises 176 residues: Peptide deformylase 1 (176 aa).

Fe cation-binding residues include C99 and H141. Residue E142 is part of the active site. H145 is a binding site for Fe cation.

Belongs to the polypeptide deformylase family. Requires Fe(2+) as cofactor.

It carries out the reaction N-terminal N-formyl-L-methionyl-[peptide] + H2O = N-terminal L-methionyl-[peptide] + formate. In terms of biological role, removes the formyl group from the N-terminal Met of newly synthesized proteins. Requires at least a dipeptide for an efficient rate of reaction. N-terminal L-methionine is a prerequisite for activity but the enzyme has broad specificity at other positions. In Nitrosomonas europaea (strain ATCC 19718 / CIP 103999 / KCTC 2705 / NBRC 14298), this protein is Peptide deformylase 1.